Reading from the N-terminus, the 64-residue chain is Large ribosomal subunit protein bL35 (64 aa).

The segment at 1 to 31 (MPKMKTHSGAKKRFKLTGTGKLKRQQANRRH) is disordered.

Belongs to the bacterial ribosomal protein bL35 family.

This chain is Large ribosomal subunit protein bL35, found in Paenarthrobacter aurescens (strain TC1).